The primary structure comprises 404 residues: CD209 antigen (404 aa).

Residues 1–37 are Cytoplasmic-facing; the sequence is MSDSKEPRLQQLGLLEEEQLRGLGFRQTRGYKSLAGC. Short sequence motifs (endocytosis signal) lie at residues 14 to 15, 16 to 18, and 31 to 34; these read LL, EEE, and YKSL. Residues 38–58 traverse the membrane as a helical; Signal-anchor for type II membrane protein segment; the sequence is LGHGPLVLQLLSFTLLAGLLV. Residues 59–404 lie on the Extracellular side of the membrane; it reads QVSKVPSSIS…APATPNPPPA (346 aa). The N-linked (GlcNAc...) asparagine glycan is linked to N80. Tandem repeats lie at residues 96 to 118, 119 to 141, 142 to 164, 165 to 187, 188 to 210, 211 to 233, and 234 to 257. The 7 X approximate tandem repeats stretch occupies residues 96-257; it reads KLQEIYQELT…AVERLCHPCP (162 aa). 3 cysteine pairs are disulfide-bonded: C256/C267, C284/C377, and C356/C369. The 116-residue stretch at 263-378 folds into the C-type lectin domain; the sequence is FQGNCYFMSN…CNLAKFWICK (116 aa). Ca(2+) is bound by residues E347, N349, V351, E354, N365, and D366.

In terms of assembly, homotetramer. Interacts with C1QBP; the interaction is indicative for a C1q:C1QBP:CD209 signaling complex. Interacts with ICAM2 and ICAM3 by binding to mannose-like carbohydrates. Interacts (via C-type lectin domain) with CEACAM1 (via Lewis X moieties); this interaction is regulated by the glycosylation pattern of CEACAM1 on cell types and regulates contact between dendritic cells and neutrophils. As to quaternary structure, (Microbial infection) Interacts with HIV-1 and HIV-2 gp120. (Microbial infection) Interacts with ebolavirus envelope glycoproteins. In terms of assembly, (Microbial infection) Interacts with cytomegalovirus gB protein. As to quaternary structure, (Microbial infection) Interacts with HCV E2 protein. (Microbial infection) Interacts with dengue virus major envelope protein E. In terms of assembly, (Microbial infection) Interacts with measles hemagglutinin. As to quaternary structure, (Microbial infection) Interacts with herpes simplex virus 1 surface proteins. (Microbial infection) Interacts with Influenzavirus A hemagglutinin. In terms of assembly, (Microbial infection) Interacts with SARS-CoV spike glycoprotein. As to quaternary structure, (Microbial infection) Interacts with Japanese encephalitis virus E protein. (Microbial infection) Interacts with Lassa virus Glycoprotein. In terms of assembly, (Microbial infection) Interacts with marburg virus glycoprotein. As to quaternary structure, (Microbial infection) Interacts with Respiratory syncytial virus glycoprotein G. (Microbial infection) Interacts with Rift valley fever virus and uukuniemi virus envelope glycoprotein. In terms of assembly, (Microbial infection) Interacts with west-nile virus envelope glycoprotein. As to quaternary structure, (Microbial infection) Interacts with whole M.bovis cells in a Ca(2+)-dependent and independent manner; in vitro experiments suggest it interacts with CH60.1 (groL1), DnaK, GADPH (gap) and LrpG. In terms of tissue distribution, predominantly expressed in dendritic cells and in DC-residing tissues. Also found in placental macrophages, endothelial cells of placental vascular channels, peripheral blood mononuclear cells, and THP-1 monocytes.

It localises to the cell membrane. The protein resides in the secreted. In terms of biological role, pathogen-recognition receptor expressed on the surface of immature dendritic cells (DCs) and involved in initiation of primary immune response. Thought to mediate the endocytosis of pathogens which are subsequently degraded in lysosomal compartments. The receptor returns to the cell membrane surface and the pathogen-derived antigens are presented to resting T-cells via MHC class II proteins to initiate the adaptive immune response. Functionally, on DCs it is a high affinity receptor for ICAM2 and ICAM3 by binding to mannose-like carbohydrates. May act as a DC rolling receptor that mediates transendothelial migration of DC presursors from blood to tissues by binding endothelial ICAM2. Seems to regulate DC-induced T-cell proliferation by binding to ICAM3 on T-cells in the immunological synapse formed between DC and T-cells. (Microbial infection) Acts as an attachment receptor for HIV-1 and HIV-2. Its function is as follows. (Microbial infection) Acts as an attachment receptor for Ebolavirus. In terms of biological role, (Microbial infection) Acts as an attachment receptor for Cytomegalovirus. Functionally, (Microbial infection) Acts as an attachment receptor for HCV. (Microbial infection) Acts as an attachment receptor for Dengue virus. Its function is as follows. (Microbial infection) Acts as an attachment receptor for Measles virus. In terms of biological role, (Microbial infection) Acts as an attachment receptor for Herpes simplex virus 1. Functionally, (Microbial infection) Acts as an attachment receptor for Influenzavirus A. (Microbial infection) Acts as an attachment receptor for SARS-CoV. Its function is as follows. (Microbial infection) Acts as an attachment receptor for Japanese encephalitis virus. In terms of biological role, (Microbial infection) Acts as an attachment receptor for Lassa virus. Acts as an attachment receptor for Marburg virusn. Functionally, (Microbial infection) Acts as an attachment receptor for Respiratory syncytial virus. (Microbial infection) Acts as an attachment receptor for Rift valley fever virus and uukuniemi virus. Its function is as follows. (Microbial infection) Acts as an attachment receptor for West-nile virus. In terms of biological role, (Microbial infection) Probably recognizes in a calcium-dependent manner high mannose N-linked oligosaccharides in a variety of bacterial pathogen antigens, including Leishmania pifanoi LPG, Lewis-x antigen in Helicobacter pylori LPS, mannose in Klebsiella pneumonae LPS, di-mannose and tri-mannose in Mycobacterium tuberculosis ManLAM and Lewis-x antigen in Schistosoma mansoni SEA. Recognition of M.tuberculosis by dendritic cells occurs partially via this molecule. The polypeptide is CD209 antigen (CD209) (Homo sapiens (Human)).